A 418-amino-acid chain; its full sequence is Glutamyl-tRNA reductase (418 aa).

Substrate-binding positions include 49–52, Ser-107, 112–114, and Gln-118; these read TCNR and EPQ. Catalysis depends on Cys-50, which acts as the Nucleophile. An NADP(+)-binding site is contributed by 187 to 192; the sequence is GAGETI.

Belongs to the glutamyl-tRNA reductase family. Homodimer.

It catalyses the reaction (S)-4-amino-5-oxopentanoate + tRNA(Glu) + NADP(+) = L-glutamyl-tRNA(Glu) + NADPH + H(+). The protein operates within porphyrin-containing compound metabolism; protoporphyrin-IX biosynthesis; 5-aminolevulinate from L-glutamyl-tRNA(Glu): step 1/2. Catalyzes the NADPH-dependent reduction of glutamyl-tRNA(Glu) to glutamate 1-semialdehyde (GSA). This chain is Glutamyl-tRNA reductase, found in Pseudoalteromonas translucida (strain TAC 125).